A 220-amino-acid polypeptide reads, in one-letter code: Fructose-6-phosphate aldolase (220 aa).

Residue K85 is the Schiff-base intermediate with substrate of the active site.

The protein belongs to the transaldolase family. Type 3A subfamily. As to quaternary structure, homodecamer.

Its subcellular location is the cytoplasm. It carries out the reaction beta-D-fructose 6-phosphate = dihydroxyacetone + D-glyceraldehyde 3-phosphate. Functionally, catalyzes the reversible formation of fructose 6-phosphate from dihydroxyacetone and D-glyceraldehyde 3-phosphate via an aldolization reaction. In Salmonella heidelberg (strain SL476), this protein is Fructose-6-phosphate aldolase.